Here is a 548-residue protein sequence, read N- to C-terminus: Natural resistance-associated macrophage protein 1 (548 aa).

A disordered region spans residues methionine 1–glutamate 38. Over methionine 1–leucine 55 the chain is Cytoplasmic. A helical transmembrane segment spans residues tryptophan 56–glycine 73. Residues asparagine 74–glycine 82 are Extracellular-facing. Residues alanine 83–leucine 102 traverse the membrane as a helical segment. Residues cysteine 103–glutamate 139 lie on the Cytoplasmic side of the membrane. A helical transmembrane segment spans residues leucine 140–leucine 160. The Extracellular portion of the chain corresponds to serine 161–arginine 164. Residues isoleucine 165–leucine 184 traverse the membrane as a helical segment. The Cytoplasmic segment spans residues aspartate 185–glutamate 193. A helical transmembrane segment spans residues alanine 194 to alanine 214. Residues glutamine 215–glutamate 237 are Extracellular-facing. The helical transmembrane segment at leucine 238–leucine 256 threads the bilayer. The Cytoplasmic segment spans residues histidine 257 to glutamate 284. A helical membrane pass occupies residues alanine 285–glycine 304. The Extracellular portion of the chain corresponds to glutamine 305–glycine 346. N-linked (GlcNAc...) asparagine glycans are attached at residues asparagine 321 and asparagine 335. The helical transmembrane segment at valine 347 to leucine 366 threads the bilayer. Topologically, residues alanine 367–arginine 397 are cytoplasmic. Residues valine 398–phenylalanine 415 form a helical membrane-spanning segment. Topologically, residues arginine 416 to aspartate 426 are extracellular. A helical membrane pass occupies residues leucine 427–threonine 447. The Cytoplasmic portion of the chain corresponds to serine 448 to lysine 463. The helical transmembrane segment at valine 464–valine 485 threads the bilayer. The Extracellular segment spans residues proline 486 to tyrosine 493. The helical transmembrane segment at phenylalanine 494 to tryptophan 513 threads the bilayer. Residues threonine 514 to glycine 548 lie on the Cytoplasmic side of the membrane.

It belongs to the NRAMP family.

The protein resides in the late endosome membrane. The protein localises to the lysosome membrane. The enzyme catalyses Zn(2+)(in) + H(+)(out) = Zn(2+)(out) + H(+)(in). It carries out the reaction Fe(2+)(in) + H(+)(out) = Fe(2+)(out) + H(+)(in). The catalysed reaction is Mn(2+)(in) + H(+)(out) = Mn(2+)(out) + H(+)(in). Functionally, macrophage-specific antiporter that fluxes metal ions in either direction against a proton gradient. Localized to late endosomal lysosomal membranes, delivers bivalent cations from the cytosol into these acidic compartments where they may directly affect antimicrobial activity. Involved in iron metabolism and host natural resistance to infection with intracellular parasites. Pathogen resistance involves sequestration of Fe(2+) and Mn(2+), cofactors of both prokaryotic and eukaryotic catalases and superoxide dismutases, not only to protect the macrophage against its own generation of reactive oxygen species, but to deny the cations to the pathogen for synthesis of its protective enzymes. The polypeptide is Natural resistance-associated macrophage protein 1 (SLC11A1) (Bison bison (American bison)).